We begin with the raw amino-acid sequence, 357 residues long: Non-structural protein NS2 (357 aa).

Disordered regions lie at residues 162-199 (QNERESAPRLQVQSVSPREESRWMDDDEAKVDEEAKEM) and 228-268 (LDEK…KTHI). Composition is skewed to acidic residues over residues 230 to 243 (EKDEEDRDEREDEE) and 250 to 260 (DDDEQGEDASD).

This sequence belongs to the orbivirus non-structural protein NS2 family.

Its function is as follows. Single-stranded RNA-binding protein. The protein is Non-structural protein NS2 (Segment-8) of Antilocapra americana (Pronghorn).